The sequence spans 190 residues: Lipid A acyltransferase PagP (190 aa).

The N-terminal stretch at 1-18 (MKRLISCLTIICALNASA) is a signal peptide. Active-site residues include His-60, Asp-103, and Ser-104.

The protein belongs to the lipid A palmitoyltransferase family. Homodimer.

Its subcellular location is the cell outer membrane. The enzyme catalyses a lipid A + a 1,2-diacyl-sn-glycero-3-phosphocholine = a hepta-acyl lipid A + a 2-acyl-sn-glycero-3-phosphocholine. It catalyses the reaction a lipid IVA + a 1,2-diacyl-sn-glycero-3-phosphocholine = a lipid IVB + a 2-acyl-sn-glycero-3-phosphocholine. The catalysed reaction is a lipid IIA + a 1,2-diacyl-sn-glycero-3-phosphocholine = a lipid IIB + a 2-acyl-sn-glycero-3-phosphocholine. Functionally, transfers a fatty acid residue from the sn-1 position of a phospholipid to the N-linked hydroxyfatty acid chain on the proximal unit of lipid A or its precursors. This Legionella pneumophila subsp. pneumophila (strain Philadelphia 1 / ATCC 33152 / DSM 7513) protein is Lipid A acyltransferase PagP.